Here is a 3242-residue protein sequence, read N- to C-terminus: MHQPPVRFTYRLLSYLISTIIAGQPLLPAVGAVITPQNGAGMDKAANGVPVVNIATPNGAGISHNRFTDYNVGKEGLILNNATGKLNPTQLGGLIQNNPNLKAGGEAKGIINEVTGGNRSLLQGYTEVAGKAANVMVANPYGITCDGCGFINTPHATLTTGRPVMNADGSLQALEVTEGSITINGAGLDGTRSDAVSIIARATEVNAALHAKDLTVTAGANRITADGRVSALKGEGDVPKVAVDTGALGGMYARRIHLTSTESGVGVNLGNLYARDGDIILSSAGKLVLKNSLAGGNTTVTGTDVSLSGDNKAGGNLSVTGTTGLTLNQPRLVTDKNLVLSSSGQIVQNGGELTAGQNAMLSAQHLNQTSGTVNAAENVTLTTTNDTTLKGRSIAGKTLTVSSGSLNNGGTLVAGRDATVKTGTFSNTGTVQGNGLKVTATDLTSTGSIKSGSTLDISARNATLSGDAGAKDSARVTVSGTLENRGRLVSDDVLTLSATQINNSGTLSGAKELVASADTLTTTEKSVTNSDGNLMLDSASSTLAGETSAGGTVSVKGNSLKTTTTAQTQGNSVSVDVQNAQLDGTQAARDILTLNASEKLTHSGKSSAPSLSLSAPELTSSGVLVGSALNTQSQTLTNSGLLQGEASLTVNTQRLDNQQNGTLYSAADLTLDIPDIRNSGLITGDNGLMLNAVSLSNPGKIIADTLSVRATTLDGDGLLQGAGALALAGDTLSQGSHGRWLTADDLSLRGKTLNTAGTTQGQNITVQADRWANSGSVLATGNLTASATGQLTSTGDIMSQGDTTLKAATTDNRGSLLSAGTLSLDGNSLDNSGTVQGDHVTIRQNSVTNSGTLTGIAALTLAARMVSPQPALMNNGGSLLTSGDLTITAGSLVNSGAIQAADSLTARLTGELVSTAGSKVTSNGEMALSALNLSNSGQWIAKNLTLKANSLTSAGDITGVDTLTLTVNQTLNNQANGKLLSAGVLTLKADSVTNDGQLQGNATTITAGQLTNGGHLQGETLTLAASGGVNNRFGGVLMSRNALNVSTATLSNQGTIQGGGGVSLNVTDRLQNDSKILSGSNLTLTAQVLANTGSGLVQAATLLLDVVNTVNGGRVLATGSADVKGTTLNNTGTLQGADLLVNYHTFSNSGTLLGTSGLGVKGSSLLQHGTGRLYSAGNLLLDAQDFSGQGQVVATGDVTLKLIAALTNHGTLAAGKTLSVTSQNAITNGGVMQGDAMVLGAGEAFTNNGMLTAGKGNSVFSAQRLFLNAPGSLQAGGDVSLNSRSDITISGFTGTAGSLTMNVAGTLLNSALIYAGNNLKLFTDRLHNQHGDILAGNSLWVQKDASGGANTEIINTSGNIETHQGDIVVRTGHLLNQREGFSATTTTRTNPSSIQGMGNALVDIPLSLLPDGSYGYFTREVENQHGTPCNGHGACNITMDTLYYYAPFADSATQRFLSSQNITTVTGADNPAGRIASGRNLSAEAERLENRASFILANGDIALSGRELSNQSWQTGTENEYLVYRYDPKTFYGSYATGSLDKLPLLSPEFENNTIRFSLDGREKDYTPGKTYYSVIQAGGDVKTRFTSSINNGTTTAHAGSVSPVVSAPVLNTLSQQTGGDSLTQTALQQYEPVVVGSPQWHDELAGALKNIAGGSPLTGQTGISDDWPLPSGNNGYLVPSTDPDSPYLITVNPKLDGLGQVDSHLFAGLYELLGAKPGQAPRETAPSYTDEKQFLGSSYFLDRLGLKPEKDYRFLGDAVFDTRYVSNAVLSRTGSRYLNGLGSDTEQMRYLMDNAARQQKGLGLEFGVALTAEQIAQLDGSILWWESATINGQTVMVPKLYLSPEDITLHNGSVISGNNVQLAGGNITNSGSSINAQNGLSLDSTGYIDNLNAGLISAGGSLDLSAIGDISNISSVISGKTVQLESVSGNISNITRRQQWNAGSDSRYGGVHLSGTDTGPVATIKGTDSLSLDAGKNIDITGATVSSGGTLGMSAGNDINIAANLISGSKSQSGFWHTDDNSASSTTSQGSSISAGGNLAMAAGHNLDVTASSVSAGHSALLSAGNDLSLNAVRESKNSRNGRSESHESHAAVSTVTAGDNLLLVAGRDVASQAAGVAAENNVVIRGGRDVNLVAESAGAGDSYTSKKKKEINETVRQQGTEIASGGDTTVNAGRDITAVASSVTATGNISVNAGRDVALTTATESDYHYLETKKKSGGFLSKKTTHTISEDSASREAGSLLSGNRVTVNAGDNLTVEGSDVVADQDVSLAAGNHVDVLAATSTDTSWRFKETKKSGLMGTGGIGFTIGSSKTTHDRREAGTTQSQSASTIGSTAGNVSITAGKQAHISGSDVIANRDISITGDSVVVDPGHDRRTVDEKFEQKKSGLTVALSGTVGSAINNAVTSAQETKESSDSRLKALQATKTALSGVQAGQAATMASATGDPNATGVSLSLTTQKSKSQQHSESDTVSGSTLNAGNNLSVVATGKNRGDNRGDIVIAGSQLKVGGNTSLDAANDILLSGAANTQKTTGRNSSSGGGVGVSIGAGGNGAGISVFAGVNAAKGSEKGNGTEWTETTTDSGKTVTINSGRDTVLNGAQVNGNRIIADVGHDLLISSQQDTSKYDSKQTSVAAGGSFTFGSMTGSGYIAASRDKMKSRFDSVAEQTGMFAGDGGFDITVGRHTQLDGAVIASTATPDKNHLDTGTLGFSDLHNEADYKVSHSGISLSGGGSFGDKFQGNMPGGMISAGGHSGHAEGTTQAAVAEGTITIRDRDNQKQNLANLSRDPAHTNDSISPIFDKEKEQRRLQTVGLISDIGSQVADIARTQGELNALKAAQDKYGPVPADATEEQRQAYLAKLRDTPEYKKEQEKYGTGSDMQRGIQAATAALQGLVGGNMAGALAGASAPELANIIGHHAGIDDNTAAKAIAHAILGGVTAALQGNSAAAGAIGAGTGEVIASAIAKSLYPGVDPSKLTEDQKQTVSTLATLSAGMAGGIASGDVAGAAAGAGAGKNVVENNALSLVARGCAVAAPCRTKVAEQLLEIGAKAGMAGLAGAAVKDMADRMTSDELEHLITLQMMGNDEITTKYLSSLHDKYGSGAASNPNIGKDLTDAEKVELGGSGSGTGTPPPSENDPKQQNEKTVDKLNQKQESAIKKIDNTIKNALKDHDIIGTLKDMDGKPVPKENGGYWDHMQEMQNTLRGLRNHADTLKNVNNPEAQAAYGRATDAINKIESALKGYGI.

An N-terminal signal peptide occupies residues 1–32 (MHQPPVRFTYRLLSYLISTIIAGQPLLPAVGA). The tract at residues 36–322 (PQNGAGMDKA…AGGNLSVTGT (287 aa)) is two-partner system transport domain (TPS). An FHA-1 region spans residues 351–1376 (GELTAGQNAM…IVVRTGHLLN (1026 aa)). A receptor-binding domain (RBD) region spans residues 1377-1668 (QREGFSATTT…TGQTGISDDW (292 aa)). Residues 1668 to 1852 (WPLPSGNNGY…LSPEDITLHN (185 aa)) are YP domain. Residues 1853 to 1913 (GSVISGNNVQ…DLSAIGDISN (61 aa)) form a periplasmic FHA-1 repeat (pFR) region. The FHA-2 stretch occupies residues 2021 to 2631 (DNSASSTTSQ…TSKYDSKQTS (611 aa)). Positions 2075 to 2091 (RESKNSRNGRSESHESH) are enriched in basic and acidic residues. 3 disordered regions span residues 2075 to 2094 (RESKNSRNGRSESHESHAAV), 2310 to 2333 (GSSKTTHDRREAGTTQSQSASTIG), and 2439 to 2481 (TMAS…NAGN). Polar residues predominate over residues 2322–2333 (GTTQSQSASTIG). A DUF638-CT domain; not toxic when added to the outside of E.coli, does not interfere with F-pilus mediated conjugation, toxic when expressed intracellularly region spans residues 2969–3242 (GVDPSKLTED…IESALKGYGI (274 aa)). A pre-toxin (PT) domain region spans residues 2972-3015 (PSKLTEDQKQTVSTLATLSAGMAGGIASGDVAGAAAGAGAGKNV). The VENN CT cleavage motif motif lies at 3016-3019 (VENN). Positions 3016-3097 (VENNALSLVA…KYLSSLHDKY (82 aa)) are toxin import domain; sufficient to import the tRNA nuclease domain of colicin E5 into E.coli, may bind F-pili. The interval 3016–3242 (VENNALSLVA…IESALKGYGI (227 aa)) is CT domain; toxic when added to the outside of E.coli and when expressed intracellularly. An inner membrane translocation domain (IMTD), targets protein to FtsH region spans residues 3020 to 3141 (ALSLVARGCA…SENDPKQQNE (122 aa)). The segment at 3020–3242 (ALSLVARGCA…IESALKGYGI (223 aa)) is C-terminal effector domain (CT). Residues 3098–3242 (GSGAASNPNI…IESALKGYGI (145 aa)) form a tRNase function, does not interfere with F-pilus mediated conjugation region. Positions 3116–3146 (KVELGGSGSGTGTPPPSENDPKQQNEKTVDK) are disordered. Basic and acidic residues predominate over residues 3134-3146 (NDPKQQNEKTVDK). Positions 3137-3238 (KQQNEKTVDK…AINKIESALK (102 aa)) form a coiled coil. Residues Asp3170, His3193, and Glu3196 contribute to the active site.

This sequence in the N-terminal section; belongs to the CdiA toxin family. As to quaternary structure, the C-terminal (CT) domain interacts with cognate CdiI but not non-cognate CdiI from D.dadantii strain 3937. CdiA-CT also interacts with CysK; this is blocked upon preincubation with O-acetyl-L-serine. CysK forms a complex with CdiA-CT/CdiI. One CdiA toxin subunit binds to each subunit of the CysK homodimer, and one CdiI immunity protein binds to each toxin subunit; the immune complex is thus a dimer of trimers. The 4 C-terminal residues of CdiA fit into the active site of CysK. Requires a divalent metal cation as cofactor.

Its subcellular location is the secreted. It is found in the target cell membrane. The protein localises to the target cell. The protein resides in the target cell cytoplasm. Its function is as follows. Toxic component of a toxin-immunity protein module, which functions as a cellular contact-dependent growth inhibition (CDI) system. CDI modules allow bacteria to communicate with and inhibit the growth of closely related neighboring bacteria in a contact-dependent fashion (target cell counts decrease 100- to 1000-fold). CdiA toxicity is neutralized by its cognate immunity protein CdiI, but not by CdiI from other bacteria. Uses heterotrimeric OmpC and OmpF as target cell outer membrane receptors; receptor function depends on polymorphisms in extracellular loops L4 and L5 of OmpC; interacts with itself and closely related bacteria but also with OmpC from E.cloacae ATCC 13047. Its ability to preferentially bind to 'self' receptors suggests it may also play a role in self-recognition and kin selection. A bamA mutation that decreases its expression about 5-fold is partially resistant to this strain of CdiA, probably due to decreased outer membrane receptor protein assembly. Isolated CdiA-CT is imported in an F-pilus-mediated fashion; CdiA-CT inhibits F-mediated conjugation, probably via its N-terminus (residues 3016-3097), although it is not clear if this is physiologically significant. Gains access to the cytoplasm of target cells by using integral inner membrane protein FtsH. The C-terminal domain (CT) cleaves within tRNA anticodon loops; this activity is inhibited by cognate CdiI. tRNase activity of CdiA-CT is stimulated by CysK, although the extreme C-terminus (residues 3098-3242) has tRNase activity in the absence of CysK. In vivo CDI toxicity requires CysK. CysK stabilizes CdiA-CT, allowing it to bind tRNA substrate; neither CdiA-CT nor CysK bind tRNA alone in vitro. Purified CdiA-CT (residues 3016-3242) inhibits E.coli cell growth when added to cultures alone or in complex with cognate CdiI, growth is inhibited when cognate CdiI is present within the cell but not when a CdiA-CT/CdiI complex is added extracellularly, suggesting CdiA-CT alone but not the CdiA-CT/CdiI complex is imported into the target cell. The CdiA protein is thought to be exported from the cell through the central lumen of CdiB, the other half of its two-partner system (TPS). The TPS domain probably remains associated with CdiB while the FHA-1 domain forms an extended filament with the receptor-binding domain (RBD) at its extremity; in the secretion arrested state the C-terminus of the RBD and YP domains form a hairpin-like structure as the FHA-2, PT and CT domains are periplasmic. The YP domain is probably responsible for this arrest at the point where it re-enters the host cell periplasm. Upon binding to a target cell outer membrane receptor (heterotrimeric OmpC-OmpF for this CDI) a signal is transmitted to activate secretion. The filament elongates slightly, the rest of CdiA is secreted and the FHA-2 domain becomes stably associated with the target cell's outer membrane where it facilitates entry of the toxic CT domain into the target cell periplasm. From there the toxic CT domain is cleaved and gains access to the target cell cytoplasm via an inner membrane protein (FtsH for this CDI). This is tRNA nuclease CdiA from Escherichia coli O6:K15:H31 (strain 536 / UPEC).